The sequence spans 77 residues: Putative snRNP Sm-like protein (77 aa).

The Sm domain maps to 4–76 (RPLDVLNRSL…VVFVSPAPGG (73 aa)).

This sequence belongs to the snRNP Sm proteins family.

The polypeptide is Putative snRNP Sm-like protein (Archaeoglobus fulgidus (strain ATCC 49558 / DSM 4304 / JCM 9628 / NBRC 100126 / VC-16)).